Consider the following 40-residue polypeptide: Photosystem II reaction center protein J (40 aa).

Residues 8–28 (IPLWLIGTVTGIPVIGLIGIF) form a helical membrane-spanning segment.

The protein belongs to the PsbJ family. PSII is composed of 1 copy each of membrane proteins PsbA, PsbB, PsbC, PsbD, PsbE, PsbF, PsbH, PsbI, PsbJ, PsbK, PsbL, PsbM, PsbT, PsbX, PsbY, PsbZ, Psb30/Ycf12, at least 3 peripheral proteins of the oxygen-evolving complex and a large number of cofactors. It forms dimeric complexes.

It is found in the plastid. The protein resides in the chloroplast thylakoid membrane. Functionally, one of the components of the core complex of photosystem II (PSII). PSII is a light-driven water:plastoquinone oxidoreductase that uses light energy to abstract electrons from H(2)O, generating O(2) and a proton gradient subsequently used for ATP formation. It consists of a core antenna complex that captures photons, and an electron transfer chain that converts photonic excitation into a charge separation. The sequence is that of Photosystem II reaction center protein J from Vitis vinifera (Grape).